We begin with the raw amino-acid sequence, 493 residues long: uncharacterized protein (493 aa).

S328 is subject to Phosphoserine. Residues 466 to 486 (AESNSGRGQNSKTKTTSVNLS) are compositionally biased toward polar residues. The disordered stretch occupies residues 466 to 493 (AESNSGRGQNSKTKTTSVNLSRNKRTRT).

This is an uncharacterized protein from Schizosaccharomyces pombe (strain 972 / ATCC 24843) (Fission yeast).